The sequence spans 271 residues: MSQHPGADGAAPVFADAVDARRAIRAGRFRGHTSGLVPAHAQGNLMILPRAMAEDFHRFCQQNPKPCPILGVSRPGARALPTLGADLDLATDVPGYRVYEGGELAAQLPDLTGVWREDLVTFVLGCSFSFEAGLIEAGIPLRHVALGRNVAMYRTSIETQPSGPFHGPLVVSMRPMKAADAIKAVQVTARMPAVHGAPIHLGDPGLIGIRDLARPDFGDPVPIEPDELPVFWACGVTPQAVAMAARLPLCITHAPGHMLITDLLNRDLPFL.

It belongs to the D-glutamate cyclase family.

In Methylobacterium radiotolerans (strain ATCC 27329 / DSM 1819 / JCM 2831 / NBRC 15690 / NCIMB 10815 / 0-1), this protein is Putative hydro-lyase Mrad2831_3350.